Reading from the N-terminus, the 616-residue chain is DNA-binding protein RFX5 (616 aa).

A disordered region spans residues 1-29 (MAEDEPDAKSPKTGGRAPPGGAEAGEPTT). Residue A2 is modified to N-acetylalanine. The residue at position 10 (S10) is a Phosphoserine. The span at 13-29 (TGGRAPPGGAEAGEPTT) shows a compositional bias: low complexity. Residues 25-90 (GEPTTLLQRL…PSTLSNEEYM (66 aa)) form an N-terminal domain region. The leucine-rich region; critical for dimer formation and for interaction with RFXAP stretch occupies residues 62 to 66 (LYLYL). The segment at residues 92 to 168 (AYRWIRNHLE…YCYSGIRRKT (77 aa)) is a DNA-binding region (RFX-type winged-helix). Residues 173 to 178 (PPLPGL) carry the PxLPxI/L motif; mediates interaction with RFXANK motif. S185 carries the post-translational modification Phosphoserine. Disordered regions lie at residues 252-314 (AEED…ESSA) and 391-616 (LPGP…ATPP). Over residues 276-293 (GAHKKPERLAQPPKDLEA) the composition is skewed to basic and acidic residues. Residues 391–401 (LPGPGPGPGRA) show a composition bias toward pro residues. A compositionally biased stretch (basic and acidic residues) spans 424–434 (GPHDKGVKRTA). Residues 463-473 (KRKRGRPRKKS) are compositionally biased toward basic residues. Residues 534 to 546 (QGDGTVSKGGRGP) show a composition bias toward gly residues. Residues 606-616 (QEHKDPKATPP) show a composition bias toward basic and acidic residues.

This sequence belongs to the RFX family. Homodimer. The RFX heterotetrameric complex consists of 2 molecules of RFX5 and one each of RFXAP and RFX-B/RFXANK; with each subunit representing a separate complementation group. Interacts (via PxLPxI/L motif) with RFXANK (via ankyrin repeats); the interaction is direct. RFX forms cooperative DNA binding complexes with X2BP and CBF/NF-Y. RFX associates with CIITA to form an active transcriptional complex. Post-translationally, phosphorylated. As to expression, ubiquitous.

Its subcellular location is the nucleus. In terms of biological role, activates transcription from class II MHC promoters. Recognizes X-boxes. Mediates cooperative binding between RFX and NF-Y. RFX binds the X1 box of MHC-II promoters. The chain is DNA-binding protein RFX5 (RFX5) from Homo sapiens (Human).